The chain runs to 999 residues: Sarcoplasmic/endoplasmic reticulum calcium ATPase 3 (999 aa).

Met-1 carries the N-acetylmethionine modification. At 1–48 (MEAAHLLPAADVLRHFSVTAEGGLSPAQVTGARERYGPNELPSEEGKS) the chain is on the cytoplasmic side. Ser-17 is modified (phosphoserine). Thr-19 is modified (phosphothreonine). Ser-25 bears the Phosphoserine mark. The chain crosses the membrane as a helical span at residues 49–69 (LWELVLEQFEDLLVRILLLAA). At 70-89 (LVSFVLAWFEEGEETTTAFV) the chain is on the lumenal side. A helical membrane pass occupies residues 90–110 (EPLVIMLILVANAIVGVWQER). Residues 111–253 (NAESAIEALK…PERTPLQRKL (143 aa)) lie on the Cytoplasmic side of the membrane. The helical transmembrane segment at 254–273 (DEFGRQLSHAISVICVAVWV) threads the bilayer. Residues 274-295 (INIGHFADPAHGGSWLRGAVYY) lie on the Lumenal side of the membrane. A helical membrane pass occupies residues 296-313 (FKIAVALAVAAIPEGLPA). Residues Val-304, Ala-305, Ile-307, and Glu-309 each coordinate Ca(2+). The Cytoplasmic portion of the chain corresponds to 314–757 (VITTCLALGT…EEGRAIYSNM (444 aa)). Asp-351 acts as the 4-aspartylphosphate intermediate in catalysis. 2 residues coordinate Mg(2+): Asp-351 and Thr-353. Thr-353 serves as a coordination point for ATP. The interaction with phospholamban 1 stretch occupies residues 370–400 (AEADAGSCLLHEFTISGTTYTPEGEVRQGDQ). Residue Thr-415 is modified to Phosphothreonine. Residues Glu-442, Arg-489, Lys-515, Arg-560, Thr-625, Gly-626, and Asp-627 each coordinate ATP. Ser-662 carries the phosphoserine modification. Residues Arg-678 and Lys-684 each coordinate ATP. Asp-703 provides a ligand contact to Mg(2+). Asn-706 lines the ATP pocket. The helical transmembrane segment at 758–777 (KQFIRYLISSNVGEVVCIFL) threads the bilayer. Ca(2+) is bound by residues Asn-768 and Glu-771. Over 778 to 787 (TAILGLPEAL) the chain is Lumenal. The chain crosses the membrane as a helical span at residues 788–808 (IPVQLLWVNLVTDGLPATALG). The segment at 788 to 808 (IPVQLLWVNLVTDGLPATALG) is interaction with phospholamban 2. Ca(2+) contacts are provided by Asn-796, Thr-799, and Asp-800. The Cytoplasmic portion of the chain corresponds to 809 to 828 (FNPPDLDIMEKLPRSPREAL). A helical transmembrane segment spans residues 829-851 (ISGWLFFRYLAIGVYVGLATVAA). Over 852 to 897 (ATWWFVYDAEGPHINFYQLRNFLKCSEDNPLFAGIDCEVFESRFPT) the chain is Lumenal. A helical transmembrane segment spans residues 898-917 (TMALSVLVTIEMCNALNSVS). Residue Glu-908 coordinates Ca(2+). At 918–930 (ENQSLLRMPPWMN) the chain is on the cytoplasmic side. The chain crosses the membrane as a helical span at residues 931–949 (PWLLVAVAMSMALHFLILL). Over 950-964 (VPPLPLIFQVTPLSG) the chain is Lumenal. A helical membrane pass occupies residues 965 to 985 (RQWVVVLQISLPVILLDEALK). At 986–999 (YLSRNHMHEEMSQK) the chain is on the cytoplasmic side.

The protein belongs to the cation transport ATPase (P-type) (TC 3.A.3) family. Type IIA subfamily. As to quaternary structure, interacts with sarcolipin (SLN). Interacts with phospholamban (PLN). Interacts with myoregulin (MRLN). Interacts with DWORF. Interacts with VMP1. Interacts with TUNAR; the interaction occurs at low levels in low glucose conditions and is increased by high glucose levels. The cofactor is Mg(2+). Found in most tissues. Most abundant in thymus, trachea, salivary gland, spleen, bone marrow, lymph node, peripheral leukocytes, pancreas and colon. Also detected in fetal tissues. Expressed in cell lineages of hematopoietic, epithelial, or embryonic origin and also expressed in several cancer cell lines.

Its subcellular location is the nucleus membrane. The protein localises to the endoplasmic reticulum membrane. It localises to the sarcoplasmic reticulum membrane. It catalyses the reaction Ca(2+)(in) + ATP + H2O = Ca(2+)(out) + ADP + phosphate + H(+). Inhibited by sarcolipin (SLN), phospholamban (PLN) and myoregulin (MRLN). Enhanced by DWORF; DWORF increases activity by displacing sarcolipin (SLN), phospholamban (PLN) and myoregulin (MRLN). Functionally, this magnesium-dependent enzyme catalyzes the hydrolysis of ATP coupled with the transport of calcium. Transports calcium ions from the cytosol into the sarcoplasmic/endoplasmic reticulum lumen. Contributes to calcium sequestration involved in muscular excitation/contraction. This is Sarcoplasmic/endoplasmic reticulum calcium ATPase 3 from Homo sapiens (Human).